The primary structure comprises 509 residues: Photosystem II CP47 reaction center protein (509 aa).

Transmembrane regions (helical) follow at residues 21 to 36 (SVHIMHTALVAGWAGS), 101 to 115 (IVFSGLCFLAAIWHW), 140 to 156 (GIHLFLAGVGCFGFGAF), 203 to 218 (IAAGTLGILAGLFHLS), 237 to 252 (VLSSSIAAVFFAAFVV), and 457 to 472 (SFALLFFFGHIWHGAR).

This sequence belongs to the PsbB/PsbC family. PsbB subfamily. As to quaternary structure, PSII is composed of 1 copy each of membrane proteins PsbA, PsbB, PsbC, PsbD, PsbE, PsbF, PsbH, PsbI, PsbJ, PsbK, PsbL, PsbM, PsbT, PsbX, PsbY, PsbZ, Psb30/Ycf12, at least 3 peripheral proteins of the oxygen-evolving complex and a large number of cofactors. It forms dimeric complexes. Binds multiple chlorophylls. PSII binds additional chlorophylls, carotenoids and specific lipids. is required as a cofactor.

The protein localises to the plastid. It is found in the chloroplast thylakoid membrane. In terms of biological role, one of the components of the core complex of photosystem II (PSII). It binds chlorophyll and helps catalyze the primary light-induced photochemical processes of PSII. PSII is a light-driven water:plastoquinone oxidoreductase, using light energy to abstract electrons from H(2)O, generating O(2) and a proton gradient subsequently used for ATP formation. This Cicer arietinum (Chickpea) protein is Photosystem II CP47 reaction center protein.